The primary structure comprises 451 residues: tRNA modification GTPase MnmE (451 aa).

Positions 23, 80, and 119 each coordinate (6S)-5-formyl-5,6,7,8-tetrahydrofolate. The TrmE-type G domain maps to 215–372; the sequence is GIKVVLTGQP…LRTVLLKTVG (158 aa). N225 contributes to the K(+) binding site. GTP-binding positions include 225-230, 244-250, and 269-272; these read NVGKSS, TEIPGTT, and DTAG. S229 is a binding site for Mg(2+). Residues T244, I246, and T249 each coordinate K(+). Residue T250 coordinates Mg(2+). K451 provides a ligand contact to (6S)-5-formyl-5,6,7,8-tetrahydrofolate.

Belongs to the TRAFAC class TrmE-Era-EngA-EngB-Septin-like GTPase superfamily. TrmE GTPase family. Homodimer. Heterotetramer of two MnmE and two MnmG subunits. K(+) is required as a cofactor.

It is found in the cytoplasm. Functionally, exhibits a very high intrinsic GTPase hydrolysis rate. Involved in the addition of a carboxymethylaminomethyl (cmnm) group at the wobble position (U34) of certain tRNAs, forming tRNA-cmnm(5)s(2)U34. The sequence is that of tRNA modification GTPase MnmE from Nitrosomonas eutropha (strain DSM 101675 / C91 / Nm57).